The following is a 214-amino-acid chain: Orotidine 5'-phosphate decarboxylase (214 aa).

Residues Asp11, Lys33, 59–68, Ser114, 164–174, Gly187, and Arg188 contribute to the substrate site; these read DFKIADIPNT and PGIGSQGGRAS. Lys61 (proton donor) is an active-site residue.

This sequence belongs to the OMP decarboxylase family. Type 1 subfamily. As to quaternary structure, homodimer.

It catalyses the reaction orotidine 5'-phosphate + H(+) = UMP + CO2. It participates in pyrimidine metabolism; UMP biosynthesis via de novo pathway; UMP from orotate: step 2/2. Its function is as follows. Catalyzes the decarboxylation of orotidine 5'-monophosphate (OMP) to uridine 5'-monophosphate (UMP). The protein is Orotidine 5'-phosphate decarboxylase of Thermoplasma acidophilum (strain ATCC 25905 / DSM 1728 / JCM 9062 / NBRC 15155 / AMRC-C165).